The primary structure comprises 1445 residues: Spermatogenesis-associated protein 31E1 (1445 aa).

The helical transmembrane segment at 64 to 84 threads the bilayer; the sequence is WMMDFILTSVCGLVLLFLLLL. Disordered regions lie at residues 90 to 115 and 169 to 262; these read PPSP…SRSR and VPAK…PDSS. Basic and acidic residues predominate over residues 101–110; it reads SREPQRERSG. The segment covering 241 to 260 has biased composition (pro residues); the sequence is VFPPSPQPHGPLASSPPPPD. N408 carries an N-linked (GlcNAc...) asparagine glycan. Disordered stretches follow at residues 411–430, 460–557, 592–619, and 637–761; these read TQPQ…TVGN, NPSS…ERTQ, LSQP…PGVV, and QEQS…KEHL. Residues 664 to 681 are compositionally biased toward polar residues; that stretch reads PQSQAEDTQQALLPSQPS. Residues N819, N906, and N1160 are each glycosylated (N-linked (GlcNAc...) asparagine). Disordered stretches follow at residues 894–966, 1143–1242, 1254–1280, and 1378–1445; these read FLGK…TCSL, RLPT…IGDK, KGQT…RKGG, and SPKA…CLAS. 2 stretches are compositionally biased toward polar residues: residues 906–915 and 1148–1165; these read NRTTSKSVPT and APLS…TASQ. The span at 1202–1217 shows a compositional bias: basic and acidic residues; the sequence is DKGEAHRRPRTGEQGH.

This sequence belongs to the SPATA31 family.

It localises to the membrane. May play a role in spermatogenesis. This is Spermatogenesis-associated protein 31E1 (SPATA31E1) from Homo sapiens (Human).